The following is a 296-amino-acid chain: Ribosomal RNA small subunit methyltransferase A (296 aa).

Residues asparagine 32, leucine 34, glycine 59, glutamate 80, aspartate 105, and asparagine 130 each coordinate S-adenosyl-L-methionine.

This sequence belongs to the class I-like SAM-binding methyltransferase superfamily. rRNA adenine N(6)-methyltransferase family. RsmA subfamily.

Its subcellular location is the cytoplasm. The enzyme catalyses adenosine(1518)/adenosine(1519) in 16S rRNA + 4 S-adenosyl-L-methionine = N(6)-dimethyladenosine(1518)/N(6)-dimethyladenosine(1519) in 16S rRNA + 4 S-adenosyl-L-homocysteine + 4 H(+). In terms of biological role, specifically dimethylates two adjacent adenosines (A1518 and A1519) in the loop of a conserved hairpin near the 3'-end of 16S rRNA in the 30S particle. May play a critical role in biogenesis of 30S subunits. The chain is Ribosomal RNA small subunit methyltransferase A from Ligilactobacillus salivarius (strain UCC118) (Lactobacillus salivarius).